The primary structure comprises 574 residues: Lysyl oxidase homolog 1 (574 aa).

A signal peptide spans 1–25; it reads MALARGSRQLGALVWGACLCVLVHG. Positions 26-95 are excised as a propeptide; the sequence is QQAQPGQGSD…RRSHGSPRRR (70 aa). Disordered stretches follow at residues 62 to 123 and 239 to 374; these read VPAG…GFGQ and GGEE…DLVP. Over residues 86–96 the composition is skewed to basic residues; it reads RRSHGSPRRRQ. 2 stretches are compositionally biased toward pro residues: residues 255–268 and 313–332; these read PERPYVPPPPPPPD and YANPPPEAYGPPRALEPPYL. The segment at 311 to 369 is interaction with FBLN5; sequence PPYANPPPEAYGPPRALEPPYLPVRSSDTPPPGGERNGAQQGRLSVGSVYRPNQNGRGL. The tract at residues 370 to 574 is lysyl-oxidase like; sequence PDLVPDPNYV…SATNCKIVQS (205 aa). Disulfide bonds link Cys-395–Cys-401, Cys-448–Cys-497, Cys-481–Cys-487, Cys-508–Cys-518, and Cys-555–Cys-569. Cu cation is bound by residues His-449, His-451, and His-453. A cross-link (lysine tyrosylquinone (Lys-Tyr); alternate) is located at residues 477-512; it reads KASFCLEDSTCDFGNLKRYACTSHTQGLSPGCYDTY. Tyr-512 is subject to 2',4',5'-topaquinone; alternate.

It belongs to the lysyl oxidase family. As to quaternary structure, interacts (via propeptide) with EFEMP2. Interacts with FBLN5. Cu cation serves as cofactor. Requires lysine tyrosylquinone residue as cofactor. The lysine tyrosylquinone cross-link (LTQ) is generated by condensation of the epsilon-amino group of a lysine with a topaquinone produced by oxidation of tyrosine. Post-translationally, proteolytic processing by a furin-like protease causes removal of N-terminal propeptide resulting in an enzyme largely inactive, but further proteolytic processing by BMP1 results in enzyme activation. In terms of tissue distribution, expressed in ocular tissues including the iris, ciliary body, lens and optic nerve. Not detected in the retina.

The protein localises to the secreted. The protein resides in the extracellular space. It localises to the extracellular matrix. The enzyme catalyses L-lysyl-[protein] + O2 + H2O = (S)-2-amino-6-oxohexanoyl-[protein] + H2O2 + NH4(+). Functionally, catalyzes the oxidative deamination of lysine and hydroxylysine residues in collagen and elastin, resulting in the formation of covalent cross-linkages, and the stabilization of collagen and elastin fibers. Essential for the elastic fiber homeostasis and for their maintenance at adult age. The polypeptide is Lysyl oxidase homolog 1 (LOXL1) (Homo sapiens (Human)).